The following is a 457-amino-acid chain: Cyanidin 3-O-galactoside 2''-O-xylosyltransferase FGGT1 (457 aa).

The protein belongs to the UDP-glycosyltransferase family. As to expression, expressed in ovaries.

It carries out the reaction cyanidin 3-O-beta-D-galactoside + UDP-alpha-D-xylose = cyanidin 3-O-[beta-D-xylosyl-(1-&gt;2)-beta-D-galactoside] + UDP + H(+). The protein operates within pigment biosynthesis; anthocyanin biosynthesis. Functionally, xylosyltransferase involved in anthocyanin biosynthesis by catalyzing the xylosylation of cyanidin 3-O-galactoside to form cyanidin 3-O-[2-O-(-xylosyl)-galactoside]. Required for the accumulation of anthocyanin in red-fleshed kiwifruit varieties. The protein is Cyanidin 3-O-galactoside 2''-O-xylosyltransferase FGGT1 of Actinidia chinensis var. chinensis (Chinese soft-hair kiwi).